The chain runs to 416 residues: Serine hydroxymethyltransferase (416 aa).

Residues Leu-121 and 125 to 127 (GHL) contribute to the (6S)-5,6,7,8-tetrahydrofolate site. An N6-(pyridoxal phosphate)lysine modification is found at Lys-229.

The protein belongs to the SHMT family. In terms of assembly, homodimer. It depends on pyridoxal 5'-phosphate as a cofactor.

Its subcellular location is the cytoplasm. The catalysed reaction is (6R)-5,10-methylene-5,6,7,8-tetrahydrofolate + glycine + H2O = (6S)-5,6,7,8-tetrahydrofolate + L-serine. It participates in one-carbon metabolism; tetrahydrofolate interconversion. Its pathway is amino-acid biosynthesis; glycine biosynthesis; glycine from L-serine: step 1/1. Functionally, catalyzes the reversible interconversion of serine and glycine with tetrahydrofolate (THF) serving as the one-carbon carrier. This reaction serves as the major source of one-carbon groups required for the biosynthesis of purines, thymidylate, methionine, and other important biomolecules. Also exhibits THF-independent aldolase activity toward beta-hydroxyamino acids, producing glycine and aldehydes, via a retro-aldol mechanism. The chain is Serine hydroxymethyltransferase from Neisseria gonorrhoeae.